The following is a 61-amino-acid chain: uncharacterized protein (61 aa).

Residues 39–61 (PRPFTPGLADPRRLGPRRVQAAQ) are disordered.

This is an uncharacterized protein from Pan troglodytes (Chimpanzee).